The chain runs to 2182 residues: Autophagy-related protein 2 (2182 aa).

Disordered regions lie at residues 291 to 375 (SPSL…PLAD), 392 to 426 (EQDYPLGDSEDALGIPYEFSNPQDDDAEDSPATPR), 523 to 630 (YTHE…STTL), 663 to 682 (DIDPENPRASTKQQEDVATP), 736 to 758 (GAFSVHGATHAQQRSSQGTSSVE), and 793 to 816 (DKKPSPAEGSKQDTASKDAPSKET). 2 stretches are compositionally biased toward polar residues: residues 303–313 (NPPSRQATELS) and 322–331 (VSSSQASIRS). Residues 332-347 (NEPESASHHSLPENDH) show a composition bias toward basic and acidic residues. Composition is skewed to acidic residues over residues 528–540 (AENEPAPEVEQTT) and 613–624 (WDDDYDDPEEEP). Polar residues predominate over residues 745 to 758 (HAQQRSSQGTSSVE). The segment covering 793 to 813 (DKKPSPAEGSKQDTASKDAPS) has biased composition (basic and acidic residues).

The protein belongs to the ATG2 family. Interacts with ATG18.

It localises to the preautophagosomal structure membrane. The protein localises to the endoplasmic reticulum membrane. The catalysed reaction is a 1,2-diacyl-sn-glycero-3-phosphocholine(in) = a 1,2-diacyl-sn-glycero-3-phosphocholine(out). The enzyme catalyses a 1,2-diacyl-sn-glycero-3-phospho-L-serine(in) = a 1,2-diacyl-sn-glycero-3-phospho-L-serine(out). It catalyses the reaction a 1,2-diacyl-sn-glycero-3-phosphoethanolamine(in) = a 1,2-diacyl-sn-glycero-3-phosphoethanolamine(out). In terms of biological role, lipid transfer protein required for autophagosome completion and peroxisome degradation and peroxisome degradation. Tethers the edge of the isolation membrane (IM) to the endoplasmic reticulum (ER) and mediates direct lipid transfer from ER to IM for IM expansion. ATG2 binds to the ER exit site (ERES), which is the membrane source for autophagosome formation, using basic residues in its N-terminal region (NR) and to the expanding edge of the IM through its C-terminal region. The latter binding is assisted by an ATG18-PtdIns3P interaction. ATG2 then extracts phospholipids from the membrane source using its NR and transfers them to ATG9 to the IM through its predicted beta-sheet-rich structure for membrane expansion. Autophagy is required for proper vegetative growth, asexual/sexual reproduction, and full virulence. Autophagy is particularly involved in the biosynthesis of deoxynivalenol (DON), an important virulence determinant. The chain is Autophagy-related protein 2 from Gibberella zeae (strain ATCC MYA-4620 / CBS 123657 / FGSC 9075 / NRRL 31084 / PH-1) (Wheat head blight fungus).